A 756-amino-acid chain; its full sequence is Deoxynucleotidyltransferase terminal-interacting protein 2 (756 aa).

Residues 1–99 (MVVTRSARAK…AESNYSVSEH (99 aa)) are disordered. A compositionally biased stretch (low complexity) spans 9–21 (AKASIQAASAESS). A Phosphoserine modification is found at serine 21. Composition is skewed to polar residues over residues 35–55 (PESS…TGKQ) and 80–96 (EPST…NYSV). Serine 117 is modified (phosphoserine). Residue threonine 129 is modified to Phosphothreonine. Phosphoserine is present on residues serine 141, serine 145, serine 148, serine 184, and serine 194. Positions 156–261 (PTEKTTGARR…LSEINKPNFY (106 aa)) are disordered. Residues 201-211 (RRTRSMQRKLK) are compositionally biased toward basic residues. Residues lysine 217 and lysine 220 each participate in a glycyl lysine isopeptide (Lys-Gly) (interchain with G-Cter in SUMO2) cross-link. At threonine 232 the chain carries Phosphothreonine. A phosphoserine mark is found at serine 239, serine 251, and serine 253. Positions 242–256 (RQTSHLQARSLSEIN) are enriched in polar residues. Residues lysine 257, lysine 316, and lysine 321 each participate in a glycyl lysine isopeptide (Lys-Gly) (interchain with G-Cter in SUMO2) cross-link. Serine 324 and serine 330 each carry phosphoserine. Lysine 345 participates in a covalent cross-link: Glycyl lysine isopeptide (Lys-Gly) (interchain with G-Cter in SUMO2). Serine 381 carries the post-translational modification Phosphoserine. Lysine 384 participates in a covalent cross-link: Glycyl lysine isopeptide (Lys-Gly) (interchain with G-Cter in SUMO2). 2 positions are modified to phosphoserine: serine 434 and serine 512. A coiled-coil region spans residues 505–542 (LEEEDKASEVAIEEEKEEEEDEKSEEDSSDHDENEDEF). The interval 510–547 (KASEVAIEEEKEEEEDEKSEEDSSDHDENEDEFSDEED) is disordered. The segment at 548 to 605 (FLNSTKAKLLKLTSSSIDPGLSIKQLGGLYINFNADKLQSNKRTLTQIKEKKKNELLQ) is tdBR region; mediates interaction with DNTT. Residue lysine 558 forms a Glycyl lysine isopeptide (Lys-Gly) (interchain with G-Cter in SUMO2) linkage. A Phosphoserine modification is found at serine 569. Glycyl lysine isopeptide (Lys-Gly) (interchain with G-Cter in SUMO2) cross-links involve residues lysine 584 and lysine 606. The residue at position 610 (threonine 610) is a Phosphothreonine. Glycyl lysine isopeptide (Lys-Gly) (interchain with G-Cter in SUMO2) cross-links involve residues lysine 626, lysine 649, lysine 658, lysine 686, and lysine 731.

In terms of assembly, forms a ternary complex with DNTT and core histone; interaction with PCNA releases DNTT and H2A/H2B histones from this ternary complex. Interacts with ESR1, ESR2, PPARG and RXRA. Part of the small subunit (SSU) processome, composed of more than 70 proteins and the RNA chaperone small nucleolar RNA (snoRNA) U3. In terms of tissue distribution, widely expressed with higher levels in testis.

The protein resides in the nucleus. The protein localises to the nucleolus. Its function is as follows. Regulates the transcriptional activity of DNTT and ESR1. May function as a chromatin remodeling protein. Part of the small subunit (SSU) processome, first precursor of the small eukaryotic ribosomal subunit. During the assembly of the SSU processome in the nucleolus, many ribosome biogenesis factors, an RNA chaperone and ribosomal proteins associate with the nascent pre-rRNA and work in concert to generate RNA folding, modifications, rearrangements and cleavage as well as targeted degradation of pre-ribosomal RNA by the RNA exosome. The protein is Deoxynucleotidyltransferase terminal-interacting protein 2 of Homo sapiens (Human).